The sequence spans 628 residues: Forkhead box protein O (628 aa).

Threonine 50 carries the post-translational modification Phosphothreonine; by PKB/AKT1. Serine 81 is subject to Phosphoserine. Residues 101–207 (WGNLSYADLI…ETSRYEKRRG (107 aa)) constitute a DNA-binding region (fork-head). 2 disordered regions span residues 188 to 210 (KSVR…GRAK) and 223 to 270 (GLND…SSCG). Serine 196 carries the post-translational modification Phosphoserine; by PKB/AKT1. 2 stretches are compositionally biased toward polar residues: residues 227-236 (ATPSPSSSVS) and 261-270 (RASSNASSCG). Position 264 is a phosphoserine; by PKB/AKT1 (serine 264). Phosphoserine is present on residues serine 267, serine 268, and serine 273. 2 disordered regions span residues 327 to 373 (SAAS…SLQP) and 398 to 451 (NSVT…QQQQ). Positions 334 to 343 (TQPPPPPYPA) are enriched in pro residues. A compositionally biased stretch (low complexity) spans 344 to 359 (PQQQQQQQPQQQQAYT). Residues 411-423 (SEPSSDSLNTYSN) are compositionally biased toward polar residues. Residues 438 to 451 (QQQRQQQQQQQQQQ) show a composition bias toward low complexity.

In terms of assembly, interacts with melt.

It is found in the cytoplasm. It localises to the nucleus. Its function is as follows. Transcription factor involved in the regulation of the insulin signaling pathway. Consistently activates both the downstream target Thor\d4EBP and the feedback control target InR. Involved in negative regulation of the cell cycle, modulating cell growth and proliferation. In response to cellular stresses, such as nutrient deprivation or increased levels of reactive oxygen species, foxo is activated and inhibits growth through the action of target genes such as Thor. Foxo activated in the adult fat body can regulate lifespan in adults; an insulin peptide itself may function as one secondary messenger of insulin-regulated aging. Also regulates Lip4, homolog of human acid lipases, thereby acting as a key modulator of lipid metabolism by insulin signaling and integrates insulin responses to glucose and lipid homeostasis. This chain is Forkhead box protein O, found in Drosophila willistoni (Fruit fly).